A 566-amino-acid polypeptide reads, in one-letter code: Rho GTPase-activating protein gacH (566 aa).

4 disordered regions span residues 1-56 (MSGV…SGAT), 65-84 (LLKQ…NNNK), 128-168 (SEDE…SAHS), and 322-366 (KPQV…NSKN). The segment covering 14 to 35 (SSTTATTTGSSKSSLNISKSVS) has biased composition (low complexity). Polar residues predominate over residues 36 to 56 (PTGNKAVSPMSSPNSLQSGAT). Positions 65–83 (LLKQQQQPNHSITTNNNNN) are enriched in low complexity. The span at 130–141 (DEYEDDEDEDEN) shows a compositional bias: acidic residues. A compositionally biased stretch (low complexity) spans 142 to 160 (NNSVNNNSNNNSNNNNNNN). Over residues 327–337 (KSPQSSGSLST) the composition is skewed to polar residues. Residues 345–356 (SSSLQRSRSVSQ) are compositionally biased toward low complexity. The region spanning 369–564 (GSLDTILEKE…LLIENYNLFY (196 aa)) is the Rho-GAP domain.

It localises to the cytoplasm. In terms of biological role, rho GTPase-activating protein involved in the signal transduction pathway. This Dictyostelium discoideum (Social amoeba) protein is Rho GTPase-activating protein gacH (gacH).